The chain runs to 214 residues: N-(5'-phosphoribosyl)anthranilate isomerase (214 aa).

This sequence belongs to the TrpF family.

It catalyses the reaction N-(5-phospho-beta-D-ribosyl)anthranilate = 1-(2-carboxyphenylamino)-1-deoxy-D-ribulose 5-phosphate. Its pathway is amino-acid biosynthesis; L-tryptophan biosynthesis; L-tryptophan from chorismate: step 3/5. In Haloarcula marismortui (strain ATCC 43049 / DSM 3752 / JCM 8966 / VKM B-1809) (Halobacterium marismortui), this protein is N-(5'-phosphoribosyl)anthranilate isomerase.